Reading from the N-terminus, the 913-residue chain is Eukaryotic translation initiation factor 3 subunit C (913 aa).

The disordered stretch occupies residues 1–44 (MSRFFTTGSDSESESSLSGEELVTKPVGGNYGKQPLLLSEDEED). A compositionally biased stretch (low complexity) spans 8–21 (GSDSESESSLSGEE). Phosphoserine occurs at positions 9, 11, 13, 15, 16, 18, and 39. Residue K99 is modified to N6-acetyllysine. Disordered stretches follow at residues 157 to 301 (TSYK…GGEW) and 522 to 542 (QLTP…NEGE). Residues S166, S178, S181, and S182 each carry the phosphoserine modification. Acidic residues predominate over residues 166–190 (SADEDAEKNEEDSEGSSDEDEDEDG). Over residues 199–216 (KKSEAPSGESRKFLKKMD) the composition is skewed to basic and acidic residues. Residues 217–232 (DEDEDSEDSEDDEDWD) are compositionally biased toward acidic residues. Positions 261–278 (PTTDEDKKAAEKKREDKA) are enriched in basic and acidic residues. The span at 522 to 531 (QLTPPEGSSK) shows a compositional bias: polar residues. T524 bears the Phosphothreonine mark. Position 643 is an N6-acetyllysine (K643). The 177-residue stretch at 673-849 (FHLHINLELL…QTVVMHRTEP (177 aa)) folds into the PCI domain. Positions 885 to 913 (FRDQKDGYRKNEGYMRRGGYRQQQSQTAY) are disordered. Residues 886–899 (RDQKDGYRKNEGYM) show a composition bias toward basic and acidic residues. A Phosphoserine modification is found at S909.

Belongs to the eIF-3 subunit C family. As to quaternary structure, component of the eukaryotic translation initiation factor 3 (eIF-3) complex, which is composed of 13 subunits: EIF3A, EIF3B, EIF3C, EIF3D, EIF3E, EIF3F, EIF3G, EIF3H, EIF3I, EIF3J, EIF3K, EIF3L and EIF3M. The eIF-3 complex appears to include 3 stable modules: module A is composed of EIF3A, EIF3B, EIF3G and EIF3I; module B is composed of EIF3F, EIF3H, and EIF3M; and module C is composed of EIF3C, EIF3D, EIF3E, EIF3K and EIF3L. EIF3C of module C binds EIF3B of module A and EIF3H of module B, thereby linking the three modules. EIF3J is a labile subunit that binds to the eIF-3 complex via EIF3B. The eIF-3 complex interacts with RPS6KB1 under conditions of nutrient depletion. Mitogenic stimulation leads to binding and activation of a complex composed of MTOR and RPTOR, leading to phosphorylation and release of RPS6KB1 and binding of EIF4B to eIF-3. Interacts with ALKBH4, IFIT1 and IFIT2. Interacts with BZW2/5MP1. Post-translationally, phosphorylated. Phosphorylation is enhanced upon serum stimulation.

Its subcellular location is the cytoplasm. Functionally, component of the eukaryotic translation initiation factor 3 (eIF-3) complex, which is required for several steps in the initiation of protein synthesis. The eIF-3 complex associates with the 40S ribosome and facilitates the recruitment of eIF-1, eIF-1A, eIF-2:GTP:methionyl-tRNAi and eIF-5 to form the 43S pre-initiation complex (43S PIC). The eIF-3 complex stimulates mRNA recruitment to the 43S PIC and scanning of the mRNA for AUG recognition. The eIF-3 complex is also required for disassembly and recycling of post-termination ribosomal complexes and subsequently prevents premature joining of the 40S and 60S ribosomal subunits prior to initiation. The eIF-3 complex specifically targets and initiates translation of a subset of mRNAs involved in cell proliferation, including cell cycling, differentiation and apoptosis, and uses different modes of RNA stem-loop binding to exert either translational activation or repression. This is Eukaryotic translation initiation factor 3 subunit C from Pongo abelii (Sumatran orangutan).